Here is a 218-residue protein sequence, read N- to C-terminus: Peptidase E (218 aa).

Residues Ser-123, Asp-138, and His-160 each act as charge relay system in the active site.

This sequence belongs to the peptidase S51 family.

Its subcellular location is the cytoplasm. It carries out the reaction Dipeptidase E catalyzes the hydrolysis of dipeptides Asp-|-Xaa. It does not act on peptides with N-terminal Glu, Asn or Gln, nor does it cleave isoaspartyl peptides.. In terms of biological role, hydrolyzes dipeptides containing N-terminal aspartate residues. May play a role in allowing the cell to use peptide aspartate to spare carbon otherwise required for the synthesis of the aspartate family of amino acids. This is Peptidase E from Haemophilus influenzae (strain ATCC 51907 / DSM 11121 / KW20 / Rd).